Here is a 688-residue protein sequence, read N- to C-terminus: Eukaryotic translation initiation factor 3 subunit B (688 aa).

The tract at residues 1 to 28 is disordered; the sequence is MAKKKGDQYDSDGAEDQDYDEEPVFEDP. A compositionally biased stretch (acidic residues) spans 9–25; that stretch reads YDSDGAEDQDYDEEPVF. Positions 57 to 141 constitute an RRM domain; that stretch reads NVIVVDNIPV…HTLLVNLFSD (85 aa). 6 WD repeats span residues 208–246, 247–287, 291–329, 332–367, 440–482, and 527–572; these read RERFTETYVKWSPLGTYIVTFHKQGVVIWGGSSFTKINK, FAHS…EKRS, DGSSNMSMFRWSHDDKYVARMGDNAIHVYETNTFYLLDK, IKVQGIRNFSWSPTDNIIAYWMSEDIDAPARVTLLE, EVKE…EPTM, and GDHY…KRVN. The stretch at 612–643 forms a coiled coil; the sequence is DRVRMTRASKELLEKRAKLREQFVEYRAKRVN.

The protein belongs to the eIF-3 subunit B family. In terms of assembly, component of the eukaryotic translation initiation factor 3 (eIF-3) complex.

It localises to the cytoplasm. Functionally, RNA-binding component of the eukaryotic translation initiation factor 3 (eIF-3) complex, which is involved in protein synthesis of a specialized repertoire of mRNAs and, together with other initiation factors, stimulates binding of mRNA and methionyl-tRNAi to the 40S ribosome. The eIF-3 complex specifically targets and initiates translation of a subset of mRNAs involved in cell proliferation. The sequence is that of Eukaryotic translation initiation factor 3 subunit B from Culex quinquefasciatus (Southern house mosquito).